The chain runs to 253 residues: uncharacterized protein (253 aa).

Residues glycine 45, 66–67 (DA), 94–95 (AE), and arginine 110 contribute to the S-adenosyl-L-methionine site.

This sequence belongs to the methyltransferase superfamily.

This is an uncharacterized protein from Bacillus subtilis (strain 168).